The primary structure comprises 147 residues: Large ribosomal subunit protein uL15 (147 aa).

Residues 1 to 45 are disordered; sequence MTIKLHHLRPAPGAKSDKIRVGRGEGGKRGKTAGRGTKGTKARKN. A compositionally biased stretch (basic and acidic residues) spans 15-28; sequence KSDKIRVGRGEGGK.

The protein belongs to the universal ribosomal protein uL15 family. As to quaternary structure, part of the 50S ribosomal subunit.

Binds to the 23S rRNA. This chain is Large ribosomal subunit protein uL15, found in Rhodococcus jostii (strain RHA1).